Here is a 353-residue protein sequence, read N- to C-terminus: Quinolinate synthase (353 aa).

Iminosuccinate contacts are provided by H47 and S68. C113 serves as a coordination point for [4Fe-4S] cluster. Iminosuccinate-binding positions include 139–141 (YAN) and S156. A [4Fe-4S] cluster-binding site is contributed by C200. Iminosuccinate-binding positions include 226–228 (HPE) and T243. C297 lines the [4Fe-4S] cluster pocket.

It belongs to the quinolinate synthase family. Type 1 subfamily. The cofactor is [4Fe-4S] cluster.

It localises to the cytoplasm. The enzyme catalyses iminosuccinate + dihydroxyacetone phosphate = quinolinate + phosphate + 2 H2O + H(+). The protein operates within cofactor biosynthesis; NAD(+) biosynthesis; quinolinate from iminoaspartate: step 1/1. Its function is as follows. Catalyzes the condensation of iminoaspartate with dihydroxyacetone phosphate to form quinolinate. This Serratia proteamaculans (strain 568) protein is Quinolinate synthase.